The following is a 389-amino-acid chain: PqqA peptide cyclase (389 aa).

Residues 19–234 (VGLPLWLLAE…TNEYRDQLAA (216 aa)) form the Radical SAM core domain. [4Fe-4S] cluster is bound by residues C33, C37, and C40.

This sequence belongs to the radical SAM superfamily. PqqE family. Interacts with PqqD. The interaction is necessary for activity of PqqE. [4Fe-4S] cluster is required as a cofactor.

It catalyses the reaction [PQQ precursor protein] + S-adenosyl-L-methionine = E-Y cross-linked-[PQQ precursor protein] + 5'-deoxyadenosine + L-methionine + H(+). Its pathway is cofactor biosynthesis; pyrroloquinoline quinone biosynthesis. In terms of biological role, catalyzes the cross-linking of a glutamate residue and a tyrosine residue in the PqqA protein as part of the biosynthesis of pyrroloquinoline quinone (PQQ). This chain is PqqA peptide cyclase, found in Pseudomonas syringae pv. tomato (strain ATCC BAA-871 / DC3000).